Reading from the N-terminus, the 567-residue chain is Type 2 DNA topoisomerase 6 subunit B (567 aa).

Residues Asn46, Asp78, 99-100, 109-116, and Lys472 contribute to the ATP site; these read TK and GQQGIGIS.

This sequence belongs to the TOP6B family. In terms of assembly, homodimer. Heterotetramer of two Top6A and two Top6B chains.

The catalysed reaction is ATP-dependent breakage, passage and rejoining of double-stranded DNA.. Relaxes both positive and negative superturns and exhibits a strong decatenase activity. The polypeptide is Type 2 DNA topoisomerase 6 subunit B (Thermococcus kodakarensis (strain ATCC BAA-918 / JCM 12380 / KOD1) (Pyrococcus kodakaraensis (strain KOD1))).